Here is a 471-residue protein sequence, read N- to C-terminus: Neuraminidase (471 aa).

Residues 1–6 lie on the Intravirion side of the membrane; that stretch reads MNPNQK. A helical transmembrane segment spans residues 7–27; the sequence is IICISATGMTLSVVSLLVGIA. The segment at 11-33 is involved in apical transport and lipid raft association; the sequence is SATGMTLSVVSLLVGIANLGLNI. At 28–471 the chain is on the virion surface side; the sequence is NLGLNIGLHY…HDGAEITYFK (444 aa). The tract at residues 36–89 is hypervariable stalk region; sequence HYKVGYTPDVNTPNVNGTNSTTTTIINNNTQNNFTNITNIIQNKNEERTFLNLT. N-linked (GlcNAc...) asparagine; by host glycosylation is found at Asn-51, Asn-54, Asn-63, Asn-68, Asn-71, and Asn-87. Positions 92 to 471 are head of neuraminidase; it reads LCEVNSWHIL…HDGAEITYFK (380 aa). Disulfide bonds link Cys-93-Cys-420, Cys-125-Cys-130, Cys-185-Cys-232, Cys-234-Cys-239, Cys-280-Cys-293, Cys-282-Cys-291, Cys-320-Cys-338, and Cys-424-Cys-450. Arg-119 serves as a coordination point for substrate. A glycan (N-linked (GlcNAc...) asparagine; by host) is linked at Asn-147. Asp-152 serves as the catalytic Proton donor/acceptor. Position 153 (Arg-153) interacts with substrate. The N-linked (GlcNAc...) asparagine; by host glycan is linked to Asn-202. 278 to 279 is a binding site for substrate; sequence EE. Residue Arg-294 participates in substrate binding. Residues Asp-295, Gly-299, and Asp-326 each contribute to the Ca(2+) site. Substrate is bound at residue Arg-373. Residue Asn-403 is glycosylated (N-linked (GlcNAc...) asparagine; by host). Tyr-407 functions as the Nucleophile in the catalytic mechanism.

This sequence belongs to the glycosyl hydrolase 34 family. Homotetramer. Ca(2+) is required as a cofactor. In terms of processing, N-glycosylated.

The protein resides in the virion membrane. It localises to the host apical cell membrane. It catalyses the reaction Hydrolysis of alpha-(2-&gt;3)-, alpha-(2-&gt;6)-, alpha-(2-&gt;8)- glycosidic linkages of terminal sialic acid residues in oligosaccharides, glycoproteins, glycolipids, colominic acid and synthetic substrates.. Inhibited by the neuraminidase inhibitors zanamivir (Relenza) and oseltamivir (Tamiflu). These drugs interfere with the release of progeny virus from infected cells and are effective against all influenza strains. Resistance to neuraminidase inhibitors is quite rare. In terms of biological role, catalyzes the removal of terminal sialic acid residues from viral and cellular glycoconjugates. Cleaves off the terminal sialic acids on the glycosylated HA during virus budding to facilitate virus release. Additionally helps virus spread through the circulation by further removing sialic acids from the cell surface. These cleavages prevent self-aggregation and ensure the efficient spread of the progeny virus from cell to cell. Otherwise, infection would be limited to one round of replication. Described as a receptor-destroying enzyme because it cleaves a terminal sialic acid from the cellular receptors. May facilitate viral invasion of the upper airways by cleaving the sialic acid moieties on the mucin of the airway epithelial cells. Likely to plays a role in the budding process through its association with lipid rafts during intracellular transport. May additionally display a raft-association independent effect on budding. Plays a role in the determination of host range restriction on replication and virulence. Sialidase activity in late endosome/lysosome traffic seems to enhance virus replication. In Aves, this protein is Neuraminidase.